Here is a 123-residue protein sequence, read N- to C-terminus: Large ribosomal subunit protein bL12 (123 aa).

This sequence belongs to the bacterial ribosomal protein bL12 family. In terms of assembly, homodimer. Part of the ribosomal stalk of the 50S ribosomal subunit. Forms a multimeric L10(L12)X complex, where L10 forms an elongated spine to which 2 to 4 L12 dimers bind in a sequential fashion. Binds GTP-bound translation factors.

Forms part of the ribosomal stalk which helps the ribosome interact with GTP-bound translation factors. Is thus essential for accurate translation. In Clostridium botulinum (strain ATCC 19397 / Type A), this protein is Large ribosomal subunit protein bL12.